The following is a 432-amino-acid chain: Trigger factor (432 aa).

The region spanning 161 to 246 (GKRVSIDFVG…VNKVEARQLP (86 aa)) is the PPIase FKBP-type domain.

Belongs to the FKBP-type PPIase family. Tig subfamily.

It is found in the cytoplasm. The enzyme catalyses [protein]-peptidylproline (omega=180) = [protein]-peptidylproline (omega=0). Functionally, involved in protein export. Acts as a chaperone by maintaining the newly synthesized protein in an open conformation. Functions as a peptidyl-prolyl cis-trans isomerase. In Vibrio vulnificus (strain CMCP6), this protein is Trigger factor.